We begin with the raw amino-acid sequence, 391 residues long: 23S rRNA (uracil(747)-C(5))-methyltransferase RlmC (391 aa).

The [4Fe-4S] cluster site is built by Cys-5, Cys-13, Cys-16, and Cys-95. Residues Gln-220, Phe-249, Glu-276, and Asn-322 each coordinate S-adenosyl-L-methionine. The active-site Nucleophile is the Cys-349.

The protein belongs to the class I-like SAM-binding methyltransferase superfamily. RNA M5U methyltransferase family. RlmC subfamily.

The catalysed reaction is uridine(747) in 23S rRNA + S-adenosyl-L-methionine = 5-methyluridine(747) in 23S rRNA + S-adenosyl-L-homocysteine + H(+). Catalyzes the formation of 5-methyl-uridine at position 747 (m5U747) in 23S rRNA. The polypeptide is 23S rRNA (uracil(747)-C(5))-methyltransferase RlmC (Actinobacillus pleuropneumoniae serotype 5b (strain L20)).